The primary structure comprises 196 residues: 3-isopropylmalate dehydratase small subunit (196 aa).

It belongs to the LeuD family. LeuD type 1 subfamily. Heterodimer of LeuC and LeuD.

The enzyme catalyses (2R,3S)-3-isopropylmalate = (2S)-2-isopropylmalate. It functions in the pathway amino-acid biosynthesis; L-leucine biosynthesis; L-leucine from 3-methyl-2-oxobutanoate: step 2/4. Functionally, catalyzes the isomerization between 2-isopropylmalate and 3-isopropylmalate, via the formation of 2-isopropylmaleate. The chain is 3-isopropylmalate dehydratase small subunit from Corynebacterium aurimucosum (strain ATCC 700975 / DSM 44827 / CIP 107346 / CN-1) (Corynebacterium nigricans).